Consider the following 342-residue polypeptide: S-adenosylmethionine:tRNA ribosyltransferase-isomerase (342 aa).

It belongs to the QueA family. Monomer.

The protein localises to the cytoplasm. It catalyses the reaction 7-aminomethyl-7-carbaguanosine(34) in tRNA + S-adenosyl-L-methionine = epoxyqueuosine(34) in tRNA + adenine + L-methionine + 2 H(+). Its pathway is tRNA modification; tRNA-queuosine biosynthesis. Transfers and isomerizes the ribose moiety from AdoMet to the 7-aminomethyl group of 7-deazaguanine (preQ1-tRNA) to give epoxyqueuosine (oQ-tRNA). In Listeria monocytogenes serotype 4b (strain F2365), this protein is S-adenosylmethionine:tRNA ribosyltransferase-isomerase.